A 238-amino-acid polypeptide reads, in one-letter code: Protein MIS12 homolog (238 aa).

Residues 117-149 (ELDAELDSLRDKLNVVGKRSVELDSELQALERS) adopt a coiled-coil conformation.

Belongs to the mis12 family.

It is found in the chromosome. It localises to the centromere. The protein resides in the kinetochore. In terms of biological role, constitutive component of kinetochores that is essential for proper cell division during mitotic cell cycle. May play a role in the modulation of centromere during meiosis. The protein is Protein MIS12 homolog of Arabidopsis thaliana (Mouse-ear cress).